The sequence spans 538 residues: MVGSDGDGDGGGGEAHAPAAPAHHHRRPPRPRGGSGAIVEGFAAALRRRIRSGAAAAARASFGGDSGDEAASGEPSSSSSSSPSRRRGGDSNGAEASSAAGGGGGRGGGGDFSAFTFRAAAPVHRKAKESPLSSDAIFKQSHAGLFNLCIVVLVAVNSRLIIENLMKYGLLIRAGFWFNDKSLRDWPLLMCCLSLPAFPLGAFAVEKLAFNNVITDAVATCLHIFLSTTEIVYPVLVILKCDSAVLSGFLLIFIACIVWLKLVSFAHTNHDIRQLTMGGKKVDNELSTVDMDNLQPPTLGNLIYFMMAPTLCYQPSYPRTSCVRKGWLIRQIILYLIFTGLQGFIIEQYINPIVVNSQHPLKGGLLNAVETVLKLSLPNVYLWLCMFYAFFHLWLSILAEILRFGDREFYKDWWNAKTIDEYWRKWNMPVHKWVVRHIYFPCMRNGISKEVAVLISFLVSAVLHEICVAVPCRILKFWAFLGIMLQIPLIVLTAYLKSKFRDTMVGNMIFWFFFCIYGQPMCLLLYYHDVMNRIEKAR.

Disordered regions lie at residues 1–39 (MVGS…GAIV) and 54–106 (AAAA…GGGR). Residues 69–83 (EAASGEPSSSSSSSP) are compositionally biased toward low complexity. 7 helical membrane-spanning segments follow: residues 136–156 (AIFK…LVAV), 186–206 (WPLL…FAVE), 218–238 (VATC…VLVI), 245–265 (VLSG…LVSF), 293–313 (NLQP…TLCY), 326–346 (GWLI…GFII), and 382–402 (LWLC…AEIL). Positions 409-415 (FYKDWWN) match the FYXDWWN motif motif. Helical transmembrane passes span 451–471 (VAVL…VAVP), 474–494 (ILKF…VLTA), and 505–525 (VGNM…CLLL). Residue histidine 464 is part of the active site.

This sequence belongs to the membrane-bound acyltransferase family. Sterol o-acyltransferase subfamily.

It is found in the endoplasmic reticulum membrane. The catalysed reaction is an acyl-CoA + a 1,2-diacyl-sn-glycerol = a triacyl-sn-glycerol + CoA. Its pathway is glycerolipid metabolism; triacylglycerol biosynthesis. Involved in triacylglycerol (TAG) synthesis. Catalyzes the acylation of the sn-3 hydroxy group of sn-1,2-diacylglycerol using acyl-CoA. The sequence is that of Diacylglycerol O-acyltransferase 1-1 from Oryza sativa subsp. japonica (Rice).